The following is a 328-amino-acid chain: Nucleotide-binding protein BLD_0430 (328 aa).

Residues 1-35 form a disordered region; sequence MNQQTTNRDTGEAAATNAPANSATSTSTPDNQPTP. The span at 13–29 shows a compositional bias: low complexity; that stretch reads AAATNAPANSATSTSTP. ATP is bound at residue 46-53; the sequence is GMSGAGRS. Residue 101 to 104 participates in GTP binding; the sequence is DVRS.

This sequence belongs to the RapZ-like family.

Its function is as follows. Displays ATPase and GTPase activities. The polypeptide is Nucleotide-binding protein BLD_0430 (Bifidobacterium longum (strain DJO10A)).